The chain runs to 323 residues: Pantothenate kinase (323 aa).

The segment covering 1–12 (MAEQNAASTTGV) has biased composition (polar residues). A disordered region spans residues 1 to 24 (MAEQNAASTTGVKPSPRTPDFSPY). 108–115 (GSVAVGKS) contributes to the ATP binding site.

Belongs to the prokaryotic pantothenate kinase family.

It is found in the cytoplasm. The enzyme catalyses (R)-pantothenate + ATP = (R)-4'-phosphopantothenate + ADP + H(+). It functions in the pathway cofactor biosynthesis; coenzyme A biosynthesis; CoA from (R)-pantothenate: step 1/5. The protein is Pantothenate kinase of Corynebacterium glutamicum (strain R).